The primary structure comprises 776 residues: Cullin-1 (776 aa).

An Omega-N-methylarginine modification is found at Arg-63. In terms of domain architecture, Cullin neddylation spans 706–766 (DRKLLIQAAI…IEKEYLERVD (61 aa)). A Glycyl lysine isopeptide (Lys-Gly) (interchain with G-Cter in NEDD8) cross-link involves residue Lys-720.

It belongs to the cullin family. In terms of assembly, component of multiple Cul1-RING E3 ubiquitin-protein ligase complexes commonly known as SCF (SKP1-CUL1-F-box) complexes, consisting of CUL1, SKP1, RBX1 and a variable F-box domain-containing protein as substrate-specific subunit. Component of the SCF(FBXW11) complex containing FBXW11. Component of the SCF(SKP2) complex containing SKP2, in which it interacts directly with SKP1, SKP2 and RBX1. Component of the SCF(FBXW2) complex containing FBXW2. Component of the SCF(FBXO32) complex containing FBXO32. Component of the probable SCF(FBXO7) complex containing FBXO7. Component of the SCF(FBXO10) complex containing FBXO10. Component of the SCF(FBXO11) complex containing FBXO11. Component of the SCF(FBXO25) complex containing FBXO25. Component of the SCF(FBXO33) complex containing FBXO33. Component of the probable SCF(FBXO4) complex containing FBXO4. Component of the SCF(FBXO44) complex, composed of SKP1, CUL1 and FBXO44. Component of the SCF(BTRC) complex, composed of SKP1, CUL1 and BTRC. This complex binds phosphorylated NFKBIA. Part of a SCF complex consisting of CUL1, RBX1, SKP1 and FBXO2. Component of a SCF(SKP2)-like complex containing CUL1, SKP1, TRIM21 and SKP2. Component of the SCF(FBXO17) complex, composed of SKP1, CUL1 and FBXO17. Component of the SCF(FBXO27) complex, composed of SKP1, CUL1 and FBXO27. Component of the SCF(CCNF) complex consisting of CUL1, RBX1, SKP1 and CCNF. Interacts with CCNF. Component of the SCF(FBXL3) complex composed of CUL1, SKP1, RBX1 and FBXL3. Component of the SCF(FBXL21) complex composed of CUL1, SKP1, RBX1 and FBXL21. Component of the SCF(FBXO9) composed of CUL1, SKP1, RBX1 and FBXO9. Component of the SCF(FBXW7) composed of CUL1, SKP1, RBX1 and FBXW7. Component of the SCF(FBXO31) complex composed of CUL1, SKP1, RBX1 and FBXO31. Interacts with CHEK2; mediates CHEK2 ubiquitination and regulates its function. Part of a complex with TIP120A/CAND1 and RBX1. The unneddylated form interacts with TIP120A/CAND1 and the interaction mediates the exchange of the F-box substrate-specific subunit. Can self-associate. Interacts with FBXW8. Interacts with RNF7. Interacts with TRIM21. Interacts with COPS2. Interacts with UBE2M. Identified in a complex with RBX1 and GLMN. Interacts with CEP68 as part of the SCF(FBXW11) complex; the interaction is probably mediated by FBXW11 and the complex also contains CDK5RAP2 and PCNT. Interacts (when neddylated) with ARIH1; leading to activate the E3 ligase activity of ARIH1. Interacts with COPS9 isoform 2. Interacts with UBXN1. Interacts with KAT7, probably as part of an SCF complex; the interaction mediates KAT7 ubiquitination. Interacts with NOTCH2. Part of a complex that contains DCUN1D5, CUL1 and RBX1; this complex is bridged by CUL1. Interacts (unneddylated form) with DCUN1D1, DCUN1D2, DCUN1D3, DCUN1D4 and DCUN1D5; these interactions promote the cullin neddylation. Interacts (via the C-terminal domain) with CUL7; the interaction seems to be mediated by FBXW8; it is likely specific to FBXW8, but not other F-box proteins. Interacts with UBR2, as part of SCF(BTRC) complex; the interaction mediates 'Lys-48'-linked ubiquitination of UBR2 and is regulated by DUSP22 in the T-cell receptor signaling pathway. As to quaternary structure, (Microbial infection) Interacts with Epstein-Barr virus BPLF1. (Microbial infection) Interacts with Human adenovirus early E1A protein; this interaction inhibits RBX1-CUL1-dependent elongation reaction of ubiquitin chains by the SCF(FBXW7) complex. In terms of assembly, (Microbial infection) Interacts with vaccinia virus protein C9L. As to quaternary structure, (Microbial infection) Interacts with Epstein-Barr virus (EBV) tegument protein BGLF2; this interaction might facilitate CUL1 recruitment to STAT2, leading to ubiquitination and degradation of the latter. Neddylated; which enhances the ubiquitination activity of SCF. Neddylation prevents binding of the inhibitor CAND1. Neddylation leads to structural rearrangment in the complex that allows interaction between the E2 ubiquitin-conjugating enzyme and the acceptor ubiquitin. Deneddylated via its interaction with the COP9 signalosome (CSN) complex. Post-translationally, (Microbial infection) Deneddylated by Epstein-Barr virus BPLF1 leading to a S-phase-like environment that is required for efficient replication of the viral genome. In terms of tissue distribution, expressed in lung fibroblasts.

It participates in protein modification; protein ubiquitination. Functionally, core component of multiple cullin-RING-based SCF (SKP1-CUL1-F-box protein) E3 ubiquitin-protein ligase complexes, which mediate the ubiquitination of proteins involved in cell cycle progression, signal transduction and transcription. SCF complexes and ARIH1 collaborate in tandem to mediate ubiquitination of target proteins. In the SCF complex, serves as a rigid scaffold that organizes the SKP1-F-box protein and RBX1 subunits. May contribute to catalysis through positioning of the substrate and the ubiquitin-conjugating enzyme. The E3 ubiquitin-protein ligase activity of the complex is dependent on the neddylation of the cullin subunit and exchange of the substrate recognition component is mediated by TIP120A/CAND1. The functional specificity of the SCF complex depends on the F-box protein as substrate recognition component. SCF(BTRC) and SCF(FBXW11) direct ubiquitination of CTNNB1 and participate in Wnt signaling. SCF(FBXW11) directs ubiquitination of phosphorylated NFKBIA. SCF(BTRC) directs ubiquitination of NFKBIB, NFKBIE, ATF4, SMAD3, SMAD4, CDC25A, FBXO5 and probably NFKB2. SCF(BTRC) and/or SCF(FBXW11) direct ubiquitination of CEP68. SCF(SKP2) directs ubiquitination of phosphorylated CDKN1B/p27kip and is involved in regulation of G1/S transition. SCF(SKP2) directs ubiquitination of ORC1, CDT1, RBL2, ELF4, CDKN1A, RAG2, FOXO1A, and probably MYC and TAL1. SCF(FBXW7) directs ubiquitination of CCNE1, NOTCH1 released notch intracellular domain (NICD), and probably PSEN1. SCF(FBXW2) directs ubiquitination of GCM1. SCF(FBXO32) directs ubiquitination of MYOD1. SCF(FBXO7) directs ubiquitination of BIRC2 and DLGAP5. SCF(FBXO33) directs ubiquitination of YBX1. SCF(FBXO1) directs ubiquitination of BCL6 and DTL but does not seem to direct ubiquitination of TP53. SCF(BTRC) mediates the ubiquitination of NFKBIA at 'Lys-21' and 'Lys-22'; the degradation frees the associated NFKB1-RELA dimer to translocate into the nucleus and to activate transcription. SCF(CCNF) directs ubiquitination of CCP110. SCF(FBXL3) and SCF(FBXL21) direct ubiquitination of CRY1 and CRY2. SCF(FBXO9) directs ubiquitination of TTI1 and TELO2. SCF(FBXO10) directs ubiquitination of BCL2. Neddylated CUL1-RBX1 ubiquitinates p53/TP53 recruited by Cul7-RING(FBXW8) complex. SCF(BTRC) directs 'Lys-48'-linked ubiquitination of UBR2 in the T-cell receptor signaling pathway. The SCF(FBXO31) protein ligase complex specifically mediates the ubiquitination of proteins amidated at their C-terminus in response to oxidative stress. The sequence is that of Cullin-1 (CUL1) from Homo sapiens (Human).